Consider the following 89-residue polypeptide: UPF0237 protein LMOf2365_0562 (89 aa).

The ACT domain maps to 4–78 (VLTVIGKDNV…EDLQVKIHIQ (75 aa)).

Belongs to the UPF0237 family.

In Listeria monocytogenes serotype 4b (strain F2365), this protein is UPF0237 protein LMOf2365_0562.